The primary structure comprises 292 residues: MSHLSQQRICSGENPFACKVCGKIFSHKSTLTEHEHFHNREKPFECNECGKAFSQKQYVIKHQNTHTGEKLLECNECGKSFSQKENLLTHQKIHTGEKPFECKDCGKAFIQKSNLIRHQRTHTGEKPFICKECGKTFSGKSNLTEHEKIHIGEKPFKCNECGTAFGQKKYLIKHQNIHTGEKPYECNECGKAFSQRTSLIVHVRIHSGDKPYECNVCGKAFSQSSSLTVHVRSHTGEKPYGCNECGKAFSQFSTLALHLRIHTGKKPYQCSECGKAFSQKSHHIRHQKIHTH.

10 consecutive C2H2-type zinc fingers follow at residues 16 to 38 (FACK…EHFH), 44 to 66 (FECN…QNTH), 72 to 94 (LECN…QKIH), 100 to 122 (FECK…QRTH), 128 to 150 (FICK…EKIH), 156 to 178 (FKCN…QNIH), 184 to 206 (YECN…VRIH), 212 to 234 (YECN…VRSH), 240 to 262 (YGCN…LRIH), and 268 to 290 (YQCS…QKIH). Residues Lys-28, Lys-51, and Lys-56 each participate in a glycyl lysine isopeptide (Lys-Gly) (interchain with G-Cter in SUMO2) cross-link. Residues Lys-157 and Lys-169 each participate in a glycyl lysine isopeptide (Lys-Gly) (interchain with G-Cter in SUMO) cross-link. A Glycyl lysine isopeptide (Lys-Gly) (interchain with G-Cter in SUMO2) cross-link involves residue Lys-173. The segment at 212-292 (YECNVCGKAF…HIRHQKIHTH (81 aa)) is interaction with TERF2IP.

Belongs to the krueppel C2H2-type zinc-finger protein family. As to quaternary structure, binds DNA. Interacts with SUMO conjugating enzyme UBC9/UBE2I. Interacts with the telomeric protein TERF2IP.

Its subcellular location is the nucleus. The chain is Zinc finger protein OZF (ZNF146) from Bos taurus (Bovine).